A 325-amino-acid polypeptide reads, in one-letter code: Brorin (325 aa).

Positions 1–27 (MPSSTAMAVGALSSSLLVTCCLMVALC) are cleaved as a signal peptide. Residues 37 to 121 (AQAPEQPGQE…RPRGDTPQAE (85 aa)) form a disordered region. 2 stretches are compositionally biased toward basic and acidic residues: residues 44 to 56 (GQEKREHASRDGP) and 64 to 78 (RPARDEGGSGRDWKS). Residues 114-116 (RGD) carry the Mediates cell adhesion motif. 2 VWFC domains span residues 153-212 (KGCV…PQCK) and 216-274 (NYCE…PICK).

In terms of assembly, peripherally associated with AMPAR complex. AMPAR complex consists of an inner core made of 4 pore-forming GluA/GRIA proteins (GRIA1, GRIA2, GRIA3 and GRIA4) and 4 major auxiliary subunits arranged in a twofold symmetry. One of the two pairs of distinct binding sites is occupied either by CNIH2, CNIH3 or CACNG2, CACNG3. The other harbors CACNG2, CACNG3, CACNG4, CACNG8 or GSG1L. This inner core of AMPAR complex is complemented by outer core constituents binding directly to the GluA/GRIA proteins at sites distinct from the interaction sites of the inner core constituents. Outer core constituents include at least PRRT1, PRRT2, CKAMP44/SHISA9, FRRS1L and NRN1. The proteins of the inner and outer core serve as a platform for other, more peripherally associated AMPAR constituents, including VWC2. Alone or in combination, these auxiliary subunits control the gating and pharmacology of the AMPAR complex and profoundly impact their biogenesis and protein processing.

It is found in the secreted. The protein resides in the extracellular space. The protein localises to the extracellular matrix. Its subcellular location is the basement membrane. It localises to the synapse. In terms of biological role, BMP antagonist which may play a role in neural development. Promotes cell adhesion. The sequence is that of Brorin (VWC2) from Homo sapiens (Human).